Here is a 78-residue protein sequence, read N- to C-terminus: Large ribosomal subunit protein bL28 (78 aa).

The segment at 1–31 is disordered; it reads MAAHCQVTGAEPGFGHSISHSHRRNKRRFDP.

It belongs to the bacterial ribosomal protein bL28 family.

The polypeptide is Large ribosomal subunit protein bL28 (Pseudarthrobacter chlorophenolicus (strain ATCC 700700 / DSM 12829 / CIP 107037 / JCM 12360 / KCTC 9906 / NCIMB 13794 / A6) (Arthrobacter chlorophenolicus)).